A 394-amino-acid polypeptide reads, in one-letter code: Ketoisovalerate oxidoreductase subunit VorA (394 aa).

In terms of assembly, heterotetramer of one alpha, one beta, one delta and one gamma chain.

It catalyses the reaction 3-methyl-2-oxobutanoate + 2 oxidized [2Fe-2S]-[ferredoxin] + CoA = 2-methylpropanoyl-CoA + 2 reduced [2Fe-2S]-[ferredoxin] + CO2 + H(+). The polypeptide is Ketoisovalerate oxidoreductase subunit VorA (vorA) (Pyrococcus horikoshii (strain ATCC 700860 / DSM 12428 / JCM 9974 / NBRC 100139 / OT-3)).